Reading from the N-terminus, the 247-residue chain is Type III pantothenate kinase (247 aa).

Residue 7 to 14 participates in ATP binding; it reads AIGNSRWH. Substrate is bound by residues Tyr91 and 95 to 98; that span reads GLDR. The active-site Proton acceptor is the Asp97. Asp117 is a K(+) binding site. Thr120 serves as a coordination point for ATP. Residue Thr172 participates in substrate binding.

The protein belongs to the type III pantothenate kinase family. Homodimer. Requires NH4(+) as cofactor. It depends on K(+) as a cofactor.

The protein resides in the cytoplasm. It catalyses the reaction (R)-pantothenate + ATP = (R)-4'-phosphopantothenate + ADP + H(+). The protein operates within cofactor biosynthesis; coenzyme A biosynthesis; CoA from (R)-pantothenate: step 1/5. Functionally, catalyzes the phosphorylation of pantothenate (Pan), the first step in CoA biosynthesis. This is Type III pantothenate kinase from Synechococcus elongatus (strain ATCC 33912 / PCC 7942 / FACHB-805) (Anacystis nidulans R2).